Consider the following 246-residue polypeptide: TVP38/TMEM64 family membrane protein MT0653 (246 aa).

The next 5 membrane-spanning stretches (helical) occupy residues 19 to 39, 57 to 77, 83 to 103, 157 to 177, and 196 to 216; these read LVVFAGFLVGMFYLVAATDVI, LTYVVVSAVLGALFVPGPILA, LFGPLVGVFVTLGATVGTAVV, AFGTFGVPLWQMAVGAFIGSA, and LLASCAIAVWCVTAIIGAFAA.

It belongs to the TVP38/TMEM64 family.

It localises to the cell membrane. This Mycobacterium tuberculosis (strain CDC 1551 / Oshkosh) protein is TVP38/TMEM64 family membrane protein MT0653.